A 107-amino-acid polypeptide reads, in one-letter code: MIIVTNTTKITKGNGHKLIERFNKVGKVETMSGFLGLEVLLTQNTVDYDEVTISTRWNAKEDFQGWTKSSAFKDAHSHQGGMPDYILDNKIAYYDVKVVRMPMAAAQ.

Residues 2-94 enclose the ABM domain; that stretch reads IIVTNTTKIT…YILDNKIAYY (93 aa). N6 lines the Fe cation pocket. H76 serves as a coordination point for heme.

It belongs to the antibiotic biosynthesis monooxygenase family. Heme-degrading monooxygenase IsdG subfamily. As to quaternary structure, homodimer.

The protein localises to the cytoplasm. It carries out the reaction heme b + 3 reduced [NADPH--hemoprotein reductase] + 3 O2 = biliverdin IXalpha + CO + Fe(2+) + 3 oxidized [NADPH--hemoprotein reductase] + 3 H2O + H(+). Functionally, allows bacterial pathogens to use the host heme as an iron source. Catalyzes the oxidative degradation of the heme macrocyclic porphyrin ring to the biliverdin in the presence of a suitable electron donor such as ascorbate or NADPH--cytochrome P450 reductase, with subsequent release of free iron. The chain is Heme-degrading monooxygenase from Bacillus mycoides (strain KBAB4) (Bacillus weihenstephanensis).